A 236-amino-acid polypeptide reads, in one-letter code: Protein Thf1 (236 aa).

The stretch at 180–220 forms a coiled coil; the sequence is PVEKMQKDLEQYRSNLEKMTQARKTLEDIVAAERKRRQQNA. Positions 206–236 are disordered; it reads EDIVAAERKRRQQNAAPDRSPESASATEAPN. Over residues 227–236 the composition is skewed to polar residues; sequence ESASATEAPN.

Belongs to the THF1 family.

In terms of biological role, may be involved in photosynthetic membrane biogenesis. The polypeptide is Protein Thf1 (Cyanothece sp. (strain PCC 7425 / ATCC 29141)).